A 134-amino-acid polypeptide reads, in one-letter code: Small ribosomal subunit protein uS8c (134 aa).

It belongs to the universal ribosomal protein uS8 family. As to quaternary structure, part of the 30S ribosomal subunit.

Its subcellular location is the plastid. The protein localises to the chloroplast. In terms of biological role, one of the primary rRNA binding proteins, it binds directly to 16S rRNA central domain where it helps coordinate assembly of the platform of the 30S subunit. This is Small ribosomal subunit protein uS8c (rps8) from Nicotiana tabacum (Common tobacco).